A 227-amino-acid chain; its full sequence is MALPTKSSILDLSSGTPCTRSPEESHEAWAQCKDAGRQLPEYKAVVVGASGVGKSALTIQMTHQCFVKDHDPTIQDSYWKEVARDNGGYILNVLDTSGQDIHRALRDQCLASGDGVLGVFALDDPSSLDQLQQIWSTWTPHHKQPLVLVGNKCDLVTTAGDAHAAAALLAHKLGAPLVKTSAKTRQGVEEAFALLVHEIQRAQEAVAESSKKTRHQKAVCSCGCSVA.

Over residues 1 to 19 (MALPTKSSILDLSSGTPCT) the composition is skewed to polar residues. The disordered stretch occupies residues 1–25 (MALPTKSSILDLSSGTPCTRSPEES). 48 to 55 (GASGVGKS) contacts GTP. The Effector region motif lies at 70-78 (HDPTIQDSY). GTP-binding positions include 95–99 (DTSGQ) and 151–154 (NKCD). Residues C220 and C222 are each lipidated (S-palmitoyl cysteine). A Cysteine methyl ester modification is found at C224. C224 is lipidated: S-farnesyl cysteine. Positions 225–227 (SVA) are cleaved as a propeptide — removed in mature form.

It belongs to the small GTPase superfamily. Ras family. Interacts with PIK3CD. In terms of tissue distribution, expressed in several undifferentiated mouse embryonic stem cell lines.

The protein localises to the cell membrane. It catalyses the reaction GTP + H2O = GDP + phosphate + H(+). Its activity is regulated as follows. Alternates between an inactive form bound to GDP and an active form bound to GTP. Activated by a guanine nucleotide-exchange factor (GEF) and inactivated by a GTPase-activating protein (GAP). Ras proteins bind GDP/GTP and possess intrinsic GTPase activity. Plays an important role in the tumor-like growth properties of embryonic stem cells. The protein is GTPase ERas (Eras) of Mus musculus (Mouse).